A 285-amino-acid polypeptide reads, in one-letter code: Glutamate racemase (285 aa).

Residues 30–31 (DS) and 62–63 (YG) contribute to the substrate site. Cysteine 94 acts as the Proton donor/acceptor in catalysis. 95 to 96 (NT) lines the substrate pocket. The Proton donor/acceptor role is filled by cysteine 206. 207–208 (TH) is a substrate binding site.

This sequence belongs to the aspartate/glutamate racemases family.

It carries out the reaction L-glutamate = D-glutamate. It participates in cell wall biogenesis; peptidoglycan biosynthesis. Functionally, provides the (R)-glutamate required for cell wall biosynthesis. In Pectobacterium atrosepticum (strain SCRI 1043 / ATCC BAA-672) (Erwinia carotovora subsp. atroseptica), this protein is Glutamate racemase.